Consider the following 374-residue polypeptide: MMLATTSSTFATLGEMVTVLSIDGGGIKGIIPATILEFLEGQLQEVDNNTDARLADYFDVIGGTGTGGLLTAMITTPNENNRPFAAAKDIIPFYFDHGPKIFEPSGFHLVEPKYDGKYLMQVLQEKLGETRVHQALTEVAISSFDIKTNKPVIFTKSNLAKTPELDAKMYDICYSTAAAPTYFPPHYFATNTSNGDQYDFNLVDGDVAAVDPSLLSISVATRLAQEDPAFASIKSLNYKQMLLLSLGTGTNSEFAKNYTAEEAAKWGILQWMSPLWEMRSAASSYMNDYYLSTVFQALDSQNNYLRVQENALTGTATTFDDASVANMILLVQVGENLLKKSVSEDNHETYEVALKRFAKLLSDRKKLRANKASF.

The signal sequence occupies residues 1–11 (MMLATTSSTFA). A PNPLA domain is found at 20 to 217 (LSIDGGGIKG…AAVDPSLLSI (198 aa)). Residues 24–29 (GGGIKG) carry the GXGXXG motif. 2 N-linked (GlcNAc...) asparagine glycosylation sites follow: Asn-48 and Asn-191. The Proton acceptor role is filled by Asp-204. Asn-257 carries an N-linked (GlcNAc...) asparagine glycan.

It belongs to the patatin family. N-glycosylated. As to expression, tuber.

It localises to the vacuole. This is Probable inactive patatin-3-Kuras 1 (pat3-k1) from Solanum tuberosum (Potato).